A 301-amino-acid polypeptide reads, in one-letter code: uncharacterized protein (301 aa).

A signal peptide spans 1 to 26 (MKGFSCSRPGYLTGLLLLAVAPILTA). The N-palmitoyl cysteine moiety is linked to residue Cys27. Residue Cys27 is the site of S-diacylglycerol cysteine attachment. One can recognise a TNase-like domain in the interval 46 to 243 (KLKPATIEYW…YNAKINIWSH (198 aa)). A disordered region spans residues 64–136 (NYASEERRKE…SKGDSTGDEK (73 aa)). Basic and acidic residues-rich tracts occupy residues 67–95 (SEER…KTED) and 120–136 (TPEK…GDEK).

It is found in the cell membrane. This is an uncharacterized protein from Mycoplasma pneumoniae (strain ATCC 29342 / M129 / Subtype 1) (Mycoplasmoides pneumoniae).